The following is a 361-amino-acid chain: GDSL esterase/lipase At4g18970 (361 aa).

An N-terminal signal peptide occupies residues 1–22; it reads MARVCVMMMAMAIAMAMNIAMG. The active-site Nucleophile is the S35. Catalysis depends on residues D325 and H328.

It belongs to the 'GDSL' lipolytic enzyme family.

The protein localises to the secreted. This Arabidopsis thaliana (Mouse-ear cress) protein is GDSL esterase/lipase At4g18970.